Consider the following 446-residue polypeptide: Sensor protein PfeS (446 aa).

The Cytoplasmic segment spans residues 1–9; the sequence is MRRHPLLWK. Residues 10–30 form a helical membrane-spanning segment; sequence LALLQVGFCLLLTWLIYTWGL. Residues 31–155 lie on the Periplasmic side of the membrane; sequence SVERSTYFLA…LLPGGLTPWT (125 aa). A helical membrane pass occupies residues 156 to 176; it reads HLVTHGIVPTLLAALLGLLLY. The 57-residue stretch at 177–233 folds into the HAMP domain; that stretch reads RHLVVPLNRLRDRADALRADELESTPLAAPLAARRDELGELAQALEHMAERLRLSLA. Residues 177–446 lie on the Cytoplasmic side of the membrane; that stretch reads RHLVVPLNRL…CLHLWLPAAA (270 aa). The 206-residue stretch at 241 to 446 folds into the Histidine kinase domain; sequence TLSHELRTPL…CLHLWLPAAA (206 aa). Phosphohistidine; by autocatalysis is present on His-244.

Its subcellular location is the cell inner membrane. It carries out the reaction ATP + protein L-histidine = ADP + protein N-phospho-L-histidine.. Member of the two-component regulatory system PfeR/PfeS. May activate PfeR by phosphorylation. The polypeptide is Sensor protein PfeS (pfeS) (Pseudomonas aeruginosa (strain ATCC 15692 / DSM 22644 / CIP 104116 / JCM 14847 / LMG 12228 / 1C / PRS 101 / PAO1)).